A 646-amino-acid chain; its full sequence is Galactofuranosyltransferase GlfT2 (646 aa).

Residues Arg-182, Gln-211, Asn-240, and Asp-267 each coordinate UDP-alpha-D-galactofuranose. Residues Asp-267 and Asp-269 each coordinate Mn(2+). Residue Asp-384 is the Proton acceptor of the active site. His-408 provides a ligand contact to Mn(2+).

This sequence belongs to the glycosyltransferase 2 family. In terms of assembly, homotetramer. Mn(2+) is required as a cofactor. Requires Mg(2+) as cofactor.

It localises to the cell membrane. It catalyses the reaction beta-D-galactofuranosyl-(1-&gt;5)-beta-D-galactofuranosyl-(1-&gt;4)-alpha-L-rhamnosyl-(1-&gt;3)-N-acetyl-alpha-D-glucosaminyl-diphospho-trans,octa-cis-decaprenol + 28 UDP-alpha-D-galactofuranose = [beta-D-galactofuranosyl-(1-&gt;5)-beta-D-galactofuranosyl-(1-&gt;6)]14-beta-D-galactofuranosyl-(1-&gt;5)-beta-D-galactofuranosyl-(1-&gt;4)-alpha-L-rhamnopyranosyl-(1-&gt;3)-N-acetyl-alpha-D-glucosaminyl-diphospho-trans,octa-cis-decaprenol + 28 UDP + 28 H(+). It functions in the pathway cell wall biogenesis; cell wall polysaccharide biosynthesis. Its function is as follows. Involved in the galactan polymerization of the arabinogalactan (AG) region of the mycolylarabinogalactan-peptidoglycan (mAGP) complex, an essential component of the mycobacteria cell wall. Thus, successively transfers approximately 28 galactofuranosyl (Galf) residues from UDP-galactofuranose (UDP-Galf) onto the galactofuranosyl-galactofuranosyl-rhamnosyl-GlcNAc-diphospho-decaprenol (Galf-Galf-Rha-GlcNAc-PP-C50) acceptor produced by GlfT1, with alternating 1-&gt;5 and 1-&gt;6 links, forming a galactan domain with approximately 30 galactofuranosyl residues. This Mycolicibacterium smegmatis (strain ATCC 700084 / mc(2)155) (Mycobacterium smegmatis) protein is Galactofuranosyltransferase GlfT2.